The primary structure comprises 559 residues: Neutral amino acid transporter 9 (559 aa).

Residues 1–118 (MANVDSDSRH…YTEGYRKNTS (118 aa)) lie on the Cytoplasmic side of the membrane. Residues 119–139 (LVTIFMIWNTMMGTSILSIPW) traverse the membrane as a helical segment. An important for arginine binding and amino acid transport region spans residues 128–133 (TMMGTS). An arginine-binding site is contributed by S133. At 140–145 (GIKQAG) the chain is on the lumenal side. Residues 146–166 (FTTGMCVIVLMGLLTLYCCYR) form a helical membrane-spanning segment. Residues 167 to 197 (VVKSRSMIVTSDTTTWEYPDVCKHYFGSFGQ) are Cytoplasmic-facing. A helical membrane pass occupies residues 198–224 (WSSLLFSLVSLIGAMIVYWVLMSNFLF). Residues 225–281 (NTGKFIFNFIHHINDTDTVLSTNNSSPVICPSAGSGHPDNSSMIFYNSDTEVRLFER) are Lumenal-facing. N-linked (GlcNAc...) asparagine glycosylation is found at N238, N247, and N264. An intrachain disulfide couples C254 to C422. The helical transmembrane segment at 282–298 (WWDKSKTVPFYLIGLLL) threads the bilayer. Residues 299–307 (PLLNFKSPS) are Cytoplasmic-facing. Residues 308-332 (FFSKFNILGTVSVLYLIFIVTLKAI) form a helical membrane-spanning segment. Residues 333-354 (RLGFHLEFHWFAPTEFFVPEIR) are Lumenal-facing. A helical membrane pass occupies residues 355–375 (AQFPQLTGVLTLAFFIHNCII). At 376–392 (TLLKNNKNQENNVRDLC) the chain is on the cytoplasmic side. A helical membrane pass occupies residues 393–413 (IAYMLVTLTYLYIGVLVFASF). Topologically, residues 414–435 (PSPPLPKDCIEQNFLDNFPSSD) are lumenal. Residues 436–456 (TLSFIARICLLFQMMTVYPLL) traverse the membrane as a helical segment. A CARC motif motif is present at residues 442-452 (RICLLFQMMTV). Residues 455-461 (LLGYLAR) carry the CRAC motif motif. The Cytoplasmic segment spans residues 457–477 (GYLARVQLLGHIFGDIYPSIF). Residues 478 to 498 (HVLILNLIIVGAGVTMACFYP) form a helical membrane-spanning segment. Residues 499-505 (NIGGIIR) lie on the Lumenal side of the membrane. The chain crosses the membrane as a helical span at residues 506 to 526 (YSGAACGLAFVFIYPSLIYIL). Topologically, residues 527-538 (SQHQEERLTWPK) are cytoplasmic. Residues 539 to 559 (LVFHIIIIILGLANLIAQFFM) form a helical membrane-spanning segment.

It belongs to the amino acid/polyamine transporter 2 family. SLC38A9 subfamily. As to quaternary structure, associated component of the Ragulator complex (composed of LAMTOR1, LAMTOR2, LAMTOR3, LAMTOR4 and LAMTOR5). Associated component of the Rag GTPases heterodimers (composed of RRAGA, RRAGB, RRAGC and RRAGD); this interaction is independent of the Ragulator complex but depends on the nucleotide loading state of the Rag GTPase heterodimer. Interacts with TM4SF5. Interacts with NPC1; this interaction inhibits cholesterol-mediated mTORC1 activation via its sterol transport activity. Glycosylated.

The protein localises to the lysosome membrane. The protein resides in the late endosome membrane. It carries out the reaction L-leucine(in) = L-leucine(out). The enzyme catalyses L-tyrosine(in) = L-tyrosine(out). The catalysed reaction is L-glutamine(out) = L-glutamine(in). It catalyses the reaction L-asparagine(out) = L-asparagine(in). Functionally, lysosomal amino acid transporter involved in the activation of mTORC1 in response to amino acid levels. Probably acts as an amino acid sensor of the Rag GTPases and Ragulator complexes, 2 complexes involved in amino acid sensing and activation of mTORC1, a signaling complex promoting cell growth in response to growth factors, energy levels, and amino acids. Following activation by amino acids, the Ragulator and Rag GTPases function as a scaffold recruiting mTORC1 to lysosomes where it is in turn activated. SLC38A9 mediates transport of amino acids with low capacity and specificity with a slight preference for polar amino acids. Acts as an arginine sensor. Following activation by arginine binding, mediates transport of L-glutamine, leucine and tyrosine with high efficiency, and is required for the efficient utilization of these amino acids after lysosomal protein degradation. However, the transport mechanism is not well defined and the role of sodium is not clear. Can disassemble the lysosomal folliculin complex (LFC), and thereby triggers GAP activity of FLCN:FNIP2 toward RRAGC. Acts as an cholesterol sensor that conveys increases in lysosomal cholesterol, leading to lysosomal recruitment and activation of mTORC1 via the Rag GTPases. Guanine exchange factor (GEF) that, upon arginine binding, stimulates GDP release from RRAGA and therefore activates the Rag GTPase heterodimer and the mTORC1 pathway in response to nutrient sufficiency. The protein is Neutral amino acid transporter 9 of Rattus norvegicus (Rat).